We begin with the raw amino-acid sequence, 872 residues long: Leucine--tRNA ligase (872 aa).

The 'HIGH' region signature appears at 42–52; that stretch reads PYPSGKLHMGH. Residues 632–636 carry the 'KMSKS' region motif; that stretch reads KMSKS. Residue lysine 635 participates in ATP binding.

This sequence belongs to the class-I aminoacyl-tRNA synthetase family.

The protein localises to the cytoplasm. The catalysed reaction is tRNA(Leu) + L-leucine + ATP = L-leucyl-tRNA(Leu) + AMP + diphosphate. The chain is Leucine--tRNA ligase from Chromobacterium violaceum (strain ATCC 12472 / DSM 30191 / JCM 1249 / CCUG 213 / NBRC 12614 / NCIMB 9131 / NCTC 9757 / MK).